The primary structure comprises 1029 residues: E3 ubiquitin-protein ligase UPL6 (1029 aa).

A disordered region spans residues 1 to 20 (MFFSGDPSTRKRVDLGGRST). A compositionally biased stretch (basic and acidic residues) spans 8–20 (STRKRVDLGGRST). An IQ domain is found at 45–74 (QNSAALKIQKFFRGRRSMAIERSKVRHDFC). Residues 688-1029 (SEDDLRSSIR…ISAEAGFDLS (342 aa)) form the HECT domain. The active-site Glycyl thioester intermediate is cysteine 997.

This sequence belongs to the UPL family.

The catalysed reaction is S-ubiquitinyl-[E2 ubiquitin-conjugating enzyme]-L-cysteine + [acceptor protein]-L-lysine = [E2 ubiquitin-conjugating enzyme]-L-cysteine + N(6)-ubiquitinyl-[acceptor protein]-L-lysine.. Its pathway is protein modification; protein ubiquitination. Its function is as follows. Probable E3 ubiquitin-protein ligase which mediates ubiquitination and subsequent proteasomal degradation of target proteins. The chain is E3 ubiquitin-protein ligase UPL6 (UPL6) from Arabidopsis thaliana (Mouse-ear cress).